Reading from the N-terminus, the 253-residue chain is 3-dehydroquinate dehydratase (253 aa).

3-dehydroquinate is bound by residues 46 to 48 and Arg82; that span reads EWR. Catalysis depends on His143, which acts as the Proton donor/acceptor. Lys170 serves as the catalytic Schiff-base intermediate with substrate. 3-dehydroquinate-binding residues include Arg213, Ser232, and Gln236.

Belongs to the type-I 3-dehydroquinase family. As to quaternary structure, homodimer.

The catalysed reaction is 3-dehydroquinate = 3-dehydroshikimate + H2O. It participates in metabolic intermediate biosynthesis; chorismate biosynthesis; chorismate from D-erythrose 4-phosphate and phosphoenolpyruvate: step 3/7. Inhibited by flavonoids such as datiscetin, naringenin, marein and phloretin. Its function is as follows. Involved in the third step of the chorismate pathway, which leads to the biosynthesis of aromatic amino acids (AroAA). Catalyzes the cis-dehydration of 3-dehydroquinate (DHQ) and introduces the first double bond of the aromatic ring to yield 3-dehydroshikimate. The reaction involves the formation of an imine intermediate between the keto group of 3-dehydroquinate and the epsilon-amino group of Lys-170 at the active site. This Enterococcus faecalis (strain ATCC 700802 / V583) protein is 3-dehydroquinate dehydratase.